Here is a 519-residue protein sequence, read N- to C-terminus: MEGVLYKWTNYLSGWQPRWFLLCGGILSYYDSPEDAWKGCKGSIQMAVCEIQVHSVDNTRMDLIIPGEQYFYLKARSVAERQRWLVALGSAKACLTDSRTQKEKEFAENTENLKTKMSELRLYCDLLVQQVDKTKEVTTTGVSNSEEGIDVGTLLKSTCNTFLKTLEECMQIANAAFTSELLYRTPPGSPQLAMLKSSKMKHPIIPIHNSLERQMELSTCENGSLNMEINGEEEILMKNKNSLYLKSAEIDCSISSEENTDDNITVQGEIRKEDGMENLKNHDNNLTQSGSDSSCSPECLWEEGKEVIPTFFSTMNTSFSDIELLEDSGIPTEAFLASCYAVVPVLDKLGPTVFAPVKMDLVGNIKKVNQKYITNKEEFTTLQKIVLHEVEADVAQVRNSATEALLWLKRGLKFLKGFLTEVKNGEKDIQTALNNAYGKTLRQHHGWVVRGVFALALRAAPSYEDFVAALTVKEGDHQKEAFSIGMQRDLSLYLPAMEKQLAILDTLYEVHGLESDEVV.

The PH domain occupies 1–93 (MEGVLYKWTN…WLVALGSAKA (93 aa)). Phosphothreonine is present on Thr-139. Ser-145 carries the phosphoserine modification. Thr-153 bears the Phosphothreonine mark. The tract at residues 310-519 (TFFSTMNTSF…VHGLESDEVV (210 aa)) is glycolipid transfer protein homology domain.

In terms of assembly, homodimer. Interacts with ARF1; the interaction together with phosphatidylinositol 4-phosphate binding is required for FAPP2 GlcCer transfer ability. As to expression, expressed in kidney cell lines.

It localises to the golgi apparatus. Its subcellular location is the trans-Golgi network membrane. The protein resides in the membrane. Its function is as follows. Cargo transport protein that is required for apical transport from the Golgi complex. Transports AQP2 from the trans-Golgi network (TGN) to sites of AQP2 phosphorylation. Mediates the non-vesicular transport of glucosylceramide (GlcCer) from the trans-Golgi network (TGN) to the plasma membrane and plays a pivotal role in the synthesis of complex glycosphingolipids. Binding of both phosphatidylinositol 4-phosphate (PIP) and ARF1 are essential for the GlcCer transfer ability. Also required for primary cilium formation, possibly by being involved in the transport of raft lipids to the apical membrane, and for membrane tubulation. This Homo sapiens (Human) protein is Pleckstrin homology domain-containing family A member 8 (PLEKHA8).